The sequence spans 185 residues: Threonylcarbamoyl-AMP synthase (185 aa).

The YrdC-like domain occupies 1–185 (MKNLNQVVDA…AKTGNTLRQG (185 aa)).

It belongs to the SUA5 family. TsaC subfamily.

It is found in the cytoplasm. It carries out the reaction L-threonine + hydrogencarbonate + ATP = L-threonylcarbamoyladenylate + diphosphate + H2O. Functionally, required for the formation of a threonylcarbamoyl group on adenosine at position 37 (t(6)A37) in tRNAs that read codons beginning with adenine. Catalyzes the conversion of L-threonine, HCO(3)(-)/CO(2) and ATP to give threonylcarbamoyl-AMP (TC-AMP) as the acyladenylate intermediate, with the release of diphosphate. This Aliivibrio fischeri (strain ATCC 700601 / ES114) (Vibrio fischeri) protein is Threonylcarbamoyl-AMP synthase.